We begin with the raw amino-acid sequence, 642 residues long: Triacylglycerol lipase 3 (642 aa).

Residues 204–392 enclose the PNPLA domain; the sequence is LILQGGSLFG…NEIEPFLNIN (189 aa). The GXSXG motif lies at 235–239; that stretch reads GSSMG. Serine 237 functions as the Nucleophile in the catalytic mechanism. The HXXXXD acyltransferase motif signature appears at 298–303; it reads HGYSQD. Glutamate 403 acts as the Proton acceptor in catalysis. Positions 471 to 481 are enriched in polar residues; that stretch reads RKTQRSSSQSP. Positions 471–502 are disordered; it reads RKTQRSSSQSPIKAGTVEDLEPEPLMSPVPPS.

The protein resides in the lipid droplet. It carries out the reaction a triacylglycerol + H2O = a diacylglycerol + a fatty acid + H(+). The enzyme catalyses 1,2,3-tri-(9Z-octadecenoyl)-glycerol + H2O = di-(9Z)-octadecenoylglycerol + (9Z)-octadecenoate + H(+). It catalyses the reaction di-(9Z)-octadecenoylglycerol + H2O = (9Z-octadecenoyl)-glycerol + (9Z)-octadecenoate + H(+). The catalysed reaction is a 1-acyl-sn-glycero-3-phosphoethanolamine + (9Z)-octadecenoyl-CoA = 1-acyl-2-(9Z)-octadecenoyl-sn-glycero-3-phosphoethanolamine + CoA. It carries out the reaction a 1-acyl-sn-glycero-3-phosphoethanolamine + hexadecanoyl-CoA = 1-acyl-2-hexadecanoyl-sn-glycero-3-phosphoethanolamine + CoA. With respect to regulation, loses its lipolytic activity in cells lacking nonpolar lipids. Lipid particle-localized triacylglycerol (TAG) lipase. The lipid droplet/particle is a lipid storage compartment which serves as a depot of energy and building blocks for membrane lipid biosynthesis. Involved in the mobilization of the non-polar storage lipids triacylglycerols (TAGs) from lipid particles by hydrolysis of TAGs, releasing and supplying specific fatty acids to the appropriate metabolic pathways. Also catalyzes the acylation of lysophosphatidic acid (LPA). Important for efficient sporulation, but rather through its acyltransferase than lipase activity. The protein is Triacylglycerol lipase 3 (TGL3) of Saccharomyces cerevisiae (strain ATCC 204508 / S288c) (Baker's yeast).